A 1500-amino-acid polypeptide reads, in one-letter code: MLEINDFNAIRISLASPEDIRSWSHGEVTKPETINYRTLKPERDGLFCERIFGPTKDWECFCGKYKRVRYKGVVCDKCGVEVTRAKVRRERMGHINLASPVSHIWFVKGTPSRLGLLLDISPRNLERVLYFASYIIVDVKEDMLQVAREMVQEEYAARREKIQKQAEEKRIELSTQLTQDLGGMETAQRSTQRQIEEDYRRQRDELVGEAERLRERLEEMSGTLADEDIIFRGVTVVEEGELINDNTLDQLDELVEQELEVLEERRRRDLADAELLTDAERERKAYEATQEQERLQERLQRELDMLVREEKEKLEQLDKLKVGLIITENEYRQLRDVAPGVFRADMGAGAIRELLERHLNLDKLAEELQAEIQTSQGQRRKKATKRLRIVEAFRKSGNRPEWMILTVLPVIPPDLRPMVQLDGGRFATSDLNDLYRRVINRNNRLKRLIELNAPEIIVRNEKRMLQEAVDALIDNGRRGRAVSGKGKHRLKSLSDMLKGKQGRFRQNLLGKRVDYSGRSVIVVGPNLQLHQCGLPKKMALELFKPFVMRRLVERGVAHNIKNAKRAVERVRPEVWDALEEVIKDYLVLLNRAPSLHRLSIQAFEAKLIEGSAIQLHPLVCAAFNADFDGDQMAVHVPLSRKAQEEARTRMLSKYNLLSPAHGEPIITPSQDIVLGCYYLTMVRDGAKGTGKRFASIDEAMLAYEKGLIDIQAPIWIRMNGSISGKSDRPVRELPPASDGTPRMVIETTIGRVLLNSELQPPLRFRNRLIDKKGLKEIIADCYQYYTSLRNLSEAQLNEVRAAHGNKHVQELARIYGSEMTAQQADRIKTLGFRYATLGGMTIGIDDIEVPAKKYDIVREAEQQVAEVEKQFRRGLITEEERYQEVVRIWQEATKQTIAAVKENLNPFGPVAMMSTSGARGNINQISQMAGMRGLMSDPTGRIIELPIKANFREGLSVLDYFVSTHGGRKGLADTALRTADAGYLTRRLVDVAQDVIINIEDCGTEEGLWLHSADDGELMEKLQVRMLGRILAAPIYDKTTGELIADRNTEIDEELAEKIIAAGHESVFVRSPLTCQAEHGLCRMCYGRNLATGKLVEIGEAVGIIAAQSIGEPGTQLTLRTFHTGGVASADDITQGLPRVQEIFEARVPKGKALLAEIDGVVQIIREDEGVRKIRIVSTNVYTDEYPLTRGFTPVIESESDVYEGQVIAEGPGGEQIIARLSGKAFIQSDRIIISQEDHEERELVVPHNARIRVENGDRVMAGQQLTDGSANPQELLELQGREAVQRYLVNEAQKVYRSQGVNINDKHIEVIARQMLRRVRIEEPGDTGLLPGELIDSAEFRRLNNDIVSQGGDPATAATVLLGITKASLNTDSFLSAASFQETTRVLTDAAIQGKVDYLRGLKENVVIGKLIPAGTGIEKRLERQHEDLISEMARMLEEVQQAEKSAEPTTTALPTTNGHQAPQSDTDALLRARLEELLSGGNDHDDEEDSDHPDLSSL.

4 residues coordinate Zn(2+): Cys60, Cys62, Cys75, and Cys78. The tract at residues 180–199 is disordered; sequence DLGGMETAQRSTQRQIEEDY. Mg(2+) contacts are provided by Asp626, Asp628, and Asp630. Residues Cys1002, Cys1075, Cys1082, and Cys1085 each contribute to the Zn(2+) site. Positions 1440–1500 are disordered; it reads EVQQAEKSAE…DSDHPDLSSL (61 aa). Residues 1449–1468 show a composition bias toward polar residues; it reads EPTTTALPTTNGHQAPQSDT.

This sequence belongs to the RNA polymerase beta' chain family. In terms of assembly, the RNAP catalytic core consists of 2 alpha, 1 beta, 1 beta' and 1 omega subunit. When a sigma factor is associated with the core the holoenzyme is formed, which can initiate transcription. It depends on Mg(2+) as a cofactor. Zn(2+) is required as a cofactor.

It carries out the reaction RNA(n) + a ribonucleoside 5'-triphosphate = RNA(n+1) + diphosphate. In terms of biological role, DNA-dependent RNA polymerase catalyzes the transcription of DNA into RNA using the four ribonucleoside triphosphates as substrates. The chain is DNA-directed RNA polymerase subunit beta' from Chloroflexus aggregans (strain MD-66 / DSM 9485).